Here is a 175-residue protein sequence, read N- to C-terminus: Large ribosomal subunit protein uL18 (175 aa).

This sequence belongs to the universal ribosomal protein uL18 family. As to quaternary structure, part of the 50S ribosomal subunit. Contacts the 5S and 23S rRNAs.

In terms of biological role, this is one of the proteins that bind and probably mediate the attachment of the 5S RNA into the large ribosomal subunit, where it forms part of the central protuberance. The sequence is that of Large ribosomal subunit protein uL18 from Methanosphaerula palustris (strain ATCC BAA-1556 / DSM 19958 / E1-9c).